The chain runs to 98 residues: Aspartyl/glutamyl-tRNA(Asn/Gln) amidotransferase subunit C (98 aa).

The protein belongs to the GatC family. In terms of assembly, heterotrimer of A, B and C subunits.

It catalyses the reaction L-glutamyl-tRNA(Gln) + L-glutamine + ATP + H2O = L-glutaminyl-tRNA(Gln) + L-glutamate + ADP + phosphate + H(+). It carries out the reaction L-aspartyl-tRNA(Asn) + L-glutamine + ATP + H2O = L-asparaginyl-tRNA(Asn) + L-glutamate + ADP + phosphate + 2 H(+). Its function is as follows. Allows the formation of correctly charged Asn-tRNA(Asn) or Gln-tRNA(Gln) through the transamidation of misacylated Asp-tRNA(Asn) or Glu-tRNA(Gln) in organisms which lack either or both of asparaginyl-tRNA or glutaminyl-tRNA synthetases. The reaction takes place in the presence of glutamine and ATP through an activated phospho-Asp-tRNA(Asn) or phospho-Glu-tRNA(Gln). This is Aspartyl/glutamyl-tRNA(Asn/Gln) amidotransferase subunit C from Mycobacterium avium (strain 104).